The following is a 68-amino-acid chain: MHFLKKSIFLVLFLGLVSLSICEKEKREDQNEEEVDENEEESEEKRGLMSVLGHAVGNVLGGLFKPKS.

A signal peptide spans methionine 1–cysteine 22. The propeptide occupies glutamate 23–arginine 46. Positions lysine 26 to glycine 47 are disordered. Acidic residues predominate over residues glutamine 30–serine 42.

This sequence belongs to the frog skin active peptide (FSAP) family. Frenatin subfamily. Expressed by the granular skin glands.

The protein resides in the secreted. Its function is as follows. Antimicrobial peptide with activity against both Gram-positive and Gram-negative bacteria. Antibacterial activities have been tested against Bacillus cereus (MIC=12.5 ug/ml), Escherichia coli (MIC=50 ug/ml), Leuconostoc mesenteroides (MIC=25 ug/ml), Micrococcus luteus (MIC=1.5 ug/ml), Pastewella haemolytica (MIC=0.8 ug/ml), Staphylococcus aureus (MIC&lt;l00 ug/ml), Streptococcus faecalis (MIC&lt;150 ug/ml) and Streptococcus uberis (MIC=50 ug/ml). Strongly inhibits the formation of NO by neuronal nitric oxide synthase (nNOS) at micromolar concentrations. Acts by a non-competitive mechanism, probably by binding to calcium/calmodulin and as a consequence blocking calmodulin attachment to nNOS. This chain is Frenatin-3, found in Nyctimystes infrafrenatus (White-lipped tree frog).